The following is an 875-amino-acid chain: Ubiquitin-protein ligase E3A (875 aa).

A C4-type; atypical zinc finger spans residues 44 to 83 (CGNEACTNEFCASCPTFLRMDNNAAAIKALELYKINAKLC). A compositionally biased stretch (basic and acidic residues) spans 175-186 (KEELKSLQAKDE). The disordered stretch occupies residues 175–226 (KEELKSLQAKDEDKDEDEKEKAACSAAAMEEDSEASSSRIGDSSQGDNNLQK). Positions 213 to 225 (RIGDSSQGDNNLQ) are enriched in polar residues. Residue S218 is modified to Phosphoserine. The E6-binding stretch occupies residues 401 to 418 (IPESSELTLQELLGEERR). The tract at residues 418-517 (RNKKGPRVDP…TVLYSLVQGQ (100 aa)) is interaction with HCV core protein. Y659 carries the phosphotyrosine; by ABL1 modification. Residues 776 to 875 (YDGGYTRDSV…ITYAKGFGML (100 aa)) form the HECT domain. The active-site Glycyl thioester intermediate is C843.

As to quaternary structure, the active form is probably a homotrimer. Binds UBQLN1 and UBQLN2. Interacts with the 26S proteasome. Interacts with BPY2. Interacts with HIF1AN, MAPK6 and NEURL4; interaction with MAPK6 may be mediated by NEURL4. Interacts with the proteasomal subunit PSMD4. Interacts with ESR1 and WBP2. Interacts with BMAL1. Interacts with ARC. In terms of assembly, (Microbial infection) Interacts with HCV core protein and targets it to degradation. (Microbial infection) Interacts with the E6 protein of the cancer-associated human papillomavirus types 16 and 18. The E6/E6-AP complex binds to and targets the p53/TP53 tumor-suppressor protein for ubiquitin-mediated proteolysis. Phosphorylation at Tyr-659 by ABL1 impairs E3 ligase activity and protects p53/TP53 from degradation in (HPV)-infected cells.

The protein localises to the cytoplasm. It is found in the nucleus. The catalysed reaction is S-ubiquitinyl-[E2 ubiquitin-conjugating enzyme]-L-cysteine + [acceptor protein]-L-lysine = [E2 ubiquitin-conjugating enzyme]-L-cysteine + N(6)-ubiquitinyl-[acceptor protein]-L-lysine.. It functions in the pathway protein modification; protein ubiquitination. E3 ubiquitin-protein ligase which accepts ubiquitin from an E2 ubiquitin-conjugating enzyme in the form of a thioester and transfers it to its substrates. Several substrates have been identified including the BMAL1, ARC, LAMTOR1, RAD23A and RAD23B, MCM7 (which is involved in DNA replication), annexin A1, the PML tumor suppressor, and the cell cycle regulator CDKN1B. Additionally, may function as a cellular quality control ubiquitin ligase by helping the degradation of the cytoplasmic misfolded proteins. Finally, UBE3A also promotes its own degradation in vivo. Plays an important role in the regulation of the circadian clock: involved in the ubiquitination of the core clock component BMAL1, leading to its proteasomal degradation. Acts as transcriptional coactivator of progesterone receptor PGR upon progesterone hormone activation. Acts as a regulator of synaptic development by mediating ubiquitination and degradation of ARC. Required for synaptic remodeling in neurons by mediating ubiquitination and degradation of LAMTOR1, thereby limiting mTORC1 signaling and activity-dependent synaptic remodeling. Synergizes with WBP2 in enhancing PGR activity. Its function is as follows. (Microbial infection) Catalyzes the high-risk human papilloma virus E6-mediated ubiquitination of p53/TP53, contributing to the neoplastic progression of cells infected by these viruses. In Homo sapiens (Human), this protein is Ubiquitin-protein ligase E3A.